The chain runs to 127 residues: Glycine cleavage system H protein (127 aa).

The region spanning 24 to 105 (TLTIGITDLA…AYDAWLFKIK (82 aa)) is the Lipoyl-binding domain. Lys65 bears the N6-lipoyllysine mark.

It belongs to the GcvH family. The glycine cleavage system is composed of four proteins: P, T, L and H. (R)-lipoate serves as cofactor.

The glycine cleavage system catalyzes the degradation of glycine. The H protein shuttles the methylamine group of glycine from the P protein to the T protein. This is Glycine cleavage system H protein from Ralstonia nicotianae (strain ATCC BAA-1114 / GMI1000) (Ralstonia solanacearum).